The chain runs to 517 residues: MTDIKDIQKIIVLDYGSQYNQLIARRIREFGIFSELRSHKVTADEVRAINPIGIVLSGGPSSVYAEDAFDIDKEILDLGIPVLGICYGMQLLTEKLGGKVVPAGQTGNSEYGQSTLHLTENSELFKETPAEQTVLMSHGDAVTEIPEGFQLVGKSSDCPYAAIENVEKKIFGIQFHPEVRHTEYGNAILRNFAFNVCKAKGDWSMDSFIDMEIEKIREQVGNRKVLLGLSGGVDSSVVGVLLQKAIGDQLTCIFVDHGLLRKGEGDQVMEMLGGRFGLNIIRVDASKRFLDLLAGIDDPEKKRKIIGNEFVYVFDDEASKQKGVDFLAQGTLYTDVIESGTETAQTIKSHHNVGGLPEDMQFELIEPLNTLFKDEVRTLGTALGMPDEIVWRQPFPGPGLAIRVMGEITAEKLETVRESDAILREEIAAAGLNRDIWQYFTVNTGVRSVGVMGDGRTYDYTIAIRAITSIDGMTADFARIPWEVLQKISVRIVNEVEHVNRIVYDITSKPPATVEWE.

The Glutamine amidotransferase type-1 domain maps to 9-202 (KIIVLDYGSQ…AFNVCKAKGD (194 aa)). The active-site Nucleophile is C86. Residues H176 and E178 contribute to the active site. The GMPS ATP-PPase domain occupies 203-392 (WSMDSFIDME…LGMPDEIVWR (190 aa)). 230 to 236 (SGGVDSS) contributes to the ATP binding site.

Homodimer.

The enzyme catalyses XMP + L-glutamine + ATP + H2O = GMP + L-glutamate + AMP + diphosphate + 2 H(+). It participates in purine metabolism; GMP biosynthesis; GMP from XMP (L-Gln route): step 1/1. Functionally, catalyzes the synthesis of GMP from XMP. The polypeptide is GMP synthase [glutamine-hydrolyzing] (Streptococcus mutans serotype c (strain ATCC 700610 / UA159)).